A 380-amino-acid polypeptide reads, in one-letter code: Pregnancy-associated glycoprotein 1 (380 aa).

Residues 1 to 15 (MKWLVLLGLVAFSEC) form the signal peptide. The propeptide at 16–53 (IVKIPLRRLKTMRNVVSGKNMLNNFLKEHAYSLSQISF) is activation peptide. Asn-57 and Asn-74 each carry an N-linked (GlcNAc...) asparagine glycan. The region spanning 71-377 (YMGNITIGTP…DRGNDRIGLA (307 aa)) is the Peptidase A1 domain. Asp-89 is an active-site residue. Cys-102 and Cys-107 are disulfide-bonded. N-linked (GlcNAc...) asparagine glycans are attached at residues Asn-125 and Asn-182. Cys-261 and Cys-265 are disulfide-bonded. Asp-270 is an active-site residue. Cys-303 and Cys-337 are joined by a disulfide.

This sequence belongs to the peptidase A1 family. Post-translationally, N-Glycosylated; the glycans terminate in either N-acetyl-galactosamine (GalNAc) or N-acetyllactosamine. Terminal GalNAc on Asn-linked glycans is greatly reduced prior to parturition while lactosamine-type N-glycans remain unaltered. In terms of tissue distribution, trophoblast and placental tissue. Produced specifically in the invasive binucleate cells of the placenta. Becomes detectable in maternal serum soon after implantation.

Its subcellular location is the secreted. The protein resides in the extracellular space. Appears to be proteolytically inactive. The protein is Pregnancy-associated glycoprotein 1 of Bos taurus (Bovine).